We begin with the raw amino-acid sequence, 365 residues long: Phosphatidylcholine:ceramide cholinephosphotransferase 4 (365 aa).

Residues 1 to 44 (MISYPFFSLSPPGLVPPPMAVPPVEMYSGSFWNRMRKPLPLRTQ) are Cytoplasmic-facing. Residues 45 to 65 (VIRFTVVFVIVSFILAVALQI) traverse the membrane as a helical segment. Over 66-92 (THERMPDPKVTKPLPDLGFELLTKVPG) the chain is Lumenal. The helical transmembrane segment at 93-113 (MYVLADCCIGFLNILSVFTAF) threads the bilayer. The Cytoplasmic portion of the chain corresponds to 114–165 (KLYLLHRHCVGSGEPELPCNIPGVSRFFLSVWLCKENCRIELRNVHTIAWIR). Residues 166 to 186 (FITSYALLLLFRSVVIVMTSL) form a helical membrane-spanning segment. Residues 187–229 (PAPDDLCQDPPKIENPVKNVILTVLTAGGGSIHCGDLMYSGHT) lie on the Lumenal side of the membrane. His228 is an active-site residue. Residues 230-250 (VILTLHLMFHWIYGAMVHWSF) traverse the membrane as a helical segment. Arg251 is a topological domain (cytoplasmic). The chain crosses the membrane as a helical span at residues 252 to 272 (PVVTVVAIFGYYCIVASRFHY). Active-site residues include His271 and Asp275. Residues 273-275 (TDD) lie on the Lumenal side of the membrane. The helical transmembrane segment at 276-296 (VLVAIYLTIATFIAVGHNADG) threads the bilayer. The Cytoplasmic portion of the chain corresponds to 297–365 (APWQLQLFIR…ALMFKCGAYV (69 aa)).

This sequence belongs to the sphingomyelin synthase family.

It is found in the golgi apparatus membrane. It catalyses the reaction an N-acylsphing-4-enine + a 1,2-diacyl-sn-glycero-3-phosphocholine = a sphingomyelin + a 1,2-diacyl-sn-glycerol. Functionally, bidirectional lipid cholinephosphotransferase capable of converting phosphatidylcholine (PC) and ceramide to sphingomyelin (SM) and diacylglycerol (DAG) and vice versa. Direction is dependent on the relative concentrations of DAG and ceramide as phosphocholine acceptors. Directly and specifically recognizes the choline head group on the substrate. Also requires two fatty chains on the choline-P donor molecule in order to be recognized efficiently as a substrate. Does not function strictly as a SM synthase. Essential for viability of the pathogenic bloodstream stage of this human protozoan parasite and, consequently, can be considered as potential drug target. In Trypanosoma brucei brucei (strain 927/4 GUTat10.1), this protein is Phosphatidylcholine:ceramide cholinephosphotransferase 4.